Reading from the N-terminus, the 467-residue chain is NADH-quinone oxidoreductase subunit H (467 aa).

The next 9 helical transmembrane spans lie at 18–38, 88–108, 131–151, 172–192, 206–226, 256–276, 296–316, 328–348, and 363–383; these read WWLVVIKAVFCFAFLMVTVLF, AVYVLAPIVAAIPAFMAIAVI, LPIAMLFILAVASVGIYGIVL, MISYEIAMGAAFASVFLYSGS, WYIVLLPVSFILYIVTMVGET, FMLAEYVNMVTVSAVATTLFL, WWPLLWFVVKVQLLLFFFIWL, LMKLGWKVLIPVSLVWLMLVA, and IALYIGGGVLVLLLLSFLVDM. Residues 389-467 are disordered; that stretch reads GKAADQPAET…PTDGKEASDG (79 aa). Residues 418–430 are compositionally biased toward pro residues; sequence PVPPMPGQQVPPV.

The protein belongs to the complex I subunit 1 family. In terms of assembly, NDH-1 is composed of 14 different subunits. Subunits NuoA, H, J, K, L, M, N constitute the membrane sector of the complex.

The protein resides in the cell membrane. It carries out the reaction a quinone + NADH + 5 H(+)(in) = a quinol + NAD(+) + 4 H(+)(out). Its function is as follows. NDH-1 shuttles electrons from NADH, via FMN and iron-sulfur (Fe-S) centers, to quinones in the respiratory chain. The immediate electron acceptor for the enzyme in this species is believed to be ubiquinone. Couples the redox reaction to proton translocation (for every two electrons transferred, four hydrogen ions are translocated across the cytoplasmic membrane), and thus conserves the redox energy in a proton gradient. This subunit may bind ubiquinone. This is NADH-quinone oxidoreductase subunit H from Streptomyces coelicolor (strain ATCC BAA-471 / A3(2) / M145).